The sequence spans 165 residues: MEEIFKIGQIVNTHGIKGEVKVYPLTEDVNKFKKLKTVLIDGEHRNIQSVKFQKDRVILKIEGIDTMNDAETYKQKYIEIFRSNAPELEADTHYIVDLIGCMVYDADNMELGKIFDVISTPSNDVYWIKQPKELLIPVLKDIVLDIDIENKKIVVKPVRQWQDED.

In terms of domain architecture, PRC barrel spans 89 to 161 (EADTHYIVDL…KIVVKPVRQW (73 aa)).

This sequence belongs to the RimM family. As to quaternary structure, binds ribosomal protein uS19.

It localises to the cytoplasm. In terms of biological role, an accessory protein needed during the final step in the assembly of 30S ribosomal subunit, possibly for assembly of the head region. Essential for efficient processing of 16S rRNA. May be needed both before and after RbfA during the maturation of 16S rRNA. It has affinity for free ribosomal 30S subunits but not for 70S ribosomes. This chain is Ribosome maturation factor RimM, found in Clostridium botulinum (strain Alaska E43 / Type E3).